A 1167-amino-acid chain; its full sequence is Pesticidal crystal protein Cry21Aa (1167 aa).

This sequence belongs to the delta endotoxin family.

Its function is as follows. Endotoxin with nematicidal activity. In Bacillus thuringiensis, this protein is Pesticidal crystal protein Cry21Aa (cry21Aa).